A 66-amino-acid polypeptide reads, in one-letter code: Surface composition regulator (66 aa).

It belongs to the GlgS family.

Its function is as follows. Major determinant of cell surface composition. Negatively regulates motility, adhesion and synthesis of biofilm exopolysaccharides. In Shigella flexneri, this protein is Surface composition regulator.